The primary structure comprises 190 residues: Isopentenyl-diphosphate Delta-isomerase (190 aa).

The Mn(2+) site is built by His-27 and His-34. The 140-residue stretch at 32–171 folds into the Nudix hydrolase domain; it reads PLHFAFSSYI…PFVFSPWMVD (140 aa). Cys-69 is a catalytic residue. Residue Cys-69 participates in Mg(2+) binding. His-71 contacts Mn(2+). Glu-89 serves as a coordination point for Mg(2+). Mn(2+) is bound by residues Glu-119 and Glu-121. Glu-121 is a catalytic residue.

The protein belongs to the IPP isomerase type 1 family. It depends on Mg(2+) as a cofactor. Mn(2+) serves as cofactor.

It localises to the cytoplasm. It carries out the reaction isopentenyl diphosphate = dimethylallyl diphosphate. The protein operates within isoprenoid biosynthesis; dimethylallyl diphosphate biosynthesis; dimethylallyl diphosphate from isopentenyl diphosphate: step 1/1. Its function is as follows. Catalyzes the 1,3-allylic rearrangement of the homoallylic substrate isopentenyl (IPP) to its highly electrophilic allylic isomer, dimethylallyl diphosphate (DMAPP). This is Isopentenyl-diphosphate Delta-isomerase from Corynebacterium efficiens (strain DSM 44549 / YS-314 / AJ 12310 / JCM 11189 / NBRC 100395).